The following is a 128-amino-acid chain: Phosphoribosyl-AMP cyclohydrolase (128 aa).

Asp94 contributes to the Mg(2+) binding site. Cys95 contacts Zn(2+). Asp96 and Asp98 together coordinate Mg(2+). Zn(2+)-binding residues include Cys111 and Cys118.

This sequence belongs to the PRA-CH family. As to quaternary structure, homodimer. It depends on Mg(2+) as a cofactor. Requires Zn(2+) as cofactor.

The protein resides in the cytoplasm. It catalyses the reaction 1-(5-phospho-beta-D-ribosyl)-5'-AMP + H2O = 1-(5-phospho-beta-D-ribosyl)-5-[(5-phospho-beta-D-ribosylamino)methylideneamino]imidazole-4-carboxamide. The protein operates within amino-acid biosynthesis; L-histidine biosynthesis; L-histidine from 5-phospho-alpha-D-ribose 1-diphosphate: step 3/9. Catalyzes the hydrolysis of the adenine ring of phosphoribosyl-AMP. The protein is Phosphoribosyl-AMP cyclohydrolase of Streptomyces coelicolor (strain ATCC BAA-471 / A3(2) / M145).